Consider the following 531-residue polypeptide: Pancreatic secretory granule membrane major glycoprotein GP2 (531 aa).

Positions 1–21 are cleaved as a signal peptide; the sequence is MVGCDLLWLAAASCVLTLVSP. Asn-33 is a glycosylation site (N-linked (GlcNAc...) asparagine). Positions 34–53 are beta hairpin; that stretch reads SSNLDLDCGSPDSPSSGICF. Disulfide bonds link Cys-41/Cys-52, Cys-56/Cys-151, Cys-79/Cys-169, Cys-101/Cys-139, Cys-107/Cys-174, Cys-132/Cys-140, Cys-184/Cys-194, Cys-188/Cys-203, Cys-205/Cys-235, Cys-223/Cys-314, and Cys-255/Cys-278. The interval 54–74 is D10C; sequence DPCQNHTVLNDPTRSTENNDS. N-linked (GlcNAc...) asparagine glycans are attached at residues Asn-58 and Asn-72. An EGF-like domain is found at 180-224; sequence APKNCEITCRPEEECVFQNNNWSCVCRQDLHVSDSQSLQPLLDCG. The N-linked (GlcNAc...) asparagine glycan is linked to Asn-200. Residues 222-315 form a ZP-N region; sequence DCGDNEIKVK…FRVNVNFQCA (94 aa). The region spanning 222–478 is the ZP domain; it reads DCGDNEIKVK…PSCSTNRLRS (257 aa). Residues Asn-256 and Asn-285 are each glycosylated (N-linked (GlcNAc...) asparagine). Residues 316–339 form a flexible ZP-N/ZP-C linker region; it reads YPLDMSVSLETALQPIVSSLTVDV. Residues 340–351 are internal hydrophobic patch (IHP); it reads DGAGEFNVKMAL. The tract at residues 340 to 478 is ZP-C; that stretch reads DGAGEFNVKM…PSCSTNRLRS (139 aa). 3 disulfide bridges follow: Cys-395/Cys-455, Cys-416/Cys-471, and Cys-460/Cys-467. Positions 485 to 493 are external hydrophobic patch (EHP); sequence YNRVLDLGP.

As to quaternary structure, interacts with SYCN. Interacts with bacterial adhesin fimH. In terms of processing, N-glycosylated. As to expression, specifically expressed by M (microfold) cells which are atypical epithelial cells of the intestine.

It is found in the zymogen granule membrane. The protein localises to the secreted. It localises to the cell membrane. The protein resides in the apical cell membrane. Its subcellular location is the membrane raft. It is found in the endosome. Functions as an intestinal M-cell transcytotic receptor specific of type-I-piliated bacteria that participates in the mucosal immune response toward these bacteria. At the apical membrane of M-cells it binds fimH, a protein of the bacteria type I pilus tip. Internalizes bound bacteria, like E.coli and S.typhimurium, from the lumen of the intestine and delivers them, through M-cells, to the underlying organized lymphoid follicles where they are captured by antigen-presenting dendritic cells to elicit a mucosal immune response. The chain is Pancreatic secretory granule membrane major glycoprotein GP2 from Mus musculus (Mouse).